Here is a 311-residue protein sequence, read N- to C-terminus: Olfactory receptor 1N1 (311 aa).

Residues 1 to 23 (MENQSSISEFFLRGISAPPEQQQ) are Extracellular-facing. N-linked (GlcNAc...) asparagine glycosylation is present at asparagine 3. Residues 24 to 47 (SLFGIFLCMYLVTLTGNLLIILAI) traverse the membrane as a helical segment. The Cytoplasmic portion of the chain corresponds to 48–55 (GSDLHLHT). The chain crosses the membrane as a helical span at residues 56-77 (PMYFFLANLSFVDMGLTSSTVT). Over 78–98 (KMLVNIQTRHHTISYTGCLTQ) the chain is Extracellular. An intrachain disulfide couples cysteine 95 to cysteine 187. A helical transmembrane segment spans residues 99-118 (MYFFLMFGDLDSFFLAAMAY). The Cytoplasmic segment spans residues 119–137 (DRYVAICHPLCYSTVMRPQ). The helical transmembrane segment at 138–156 (VCALMLALCWVLTNIVALT) threads the bilayer. At 157–194 (HTFLMARLSFCVTGEIAHFFCDITPVLKLSCSDTHINE) the chain is on the extracellular side. The chain crosses the membrane as a helical span at residues 195–217 (MMVFVLGGTVLIVPFLCIVTSYI). Residues 218–234 (HIVPAILRVRTRGGVGK) are Cytoplasmic-facing. A helical transmembrane segment spans residues 235-257 (AFSTCSSHLCVVCVFYGTLFSAY). The Extracellular segment spans residues 258–270 (LCPPSIASEEKDI). The helical transmembrane segment at 271 to 290 (AAAAMYTIVTPMLNPFIYSL) threads the bilayer. Over 291 to 311 (RNKDMKGALKRLFSHRSIVSS) the chain is Cytoplasmic.

This sequence belongs to the G-protein coupled receptor 1 family.

Its subcellular location is the cell membrane. Functionally, odorant receptor. This chain is Olfactory receptor 1N1 (OR1N1), found in Homo sapiens (Human).